The chain runs to 525 residues: Ent-kaurene oxidase (525 aa).

The chain crosses the membrane as a helical span at residues 31–51 (VHWLIYVAFGAWLCSYVIHVL). Cysteine 466 is a binding site for heme.

This sequence belongs to the cytochrome P450 family. Requires heme as cofactor.

It localises to the membrane. The catalysed reaction is ent-kaur-16-ene + 3 reduced [NADPH--hemoprotein reductase] + 3 O2 = ent-kaur-16-en-19-oate + 3 oxidized [NADPH--hemoprotein reductase] + 4 H2O + 4 H(+). Its pathway is plant hormone biosynthesis; gibberellin biosynthesis. Its function is as follows. Catalyzes three successive oxidations of the 4-methyl group of ent-kaurene giving kaurenoic acid, a key step in gibberellin (GA) biosynthesis. This is Ent-kaurene oxidase (CYP503A1) from Fusarium fujikuroi (Bakanae and foot rot disease fungus).